Reading from the N-terminus, the 370-residue chain is Flagellar P-ring protein (370 aa).

An N-terminal signal peptide occupies residues 1-24; sequence MTLSKWILSFGLSVCLIVSHPVSA.

This sequence belongs to the FlgI family. The basal body constitutes a major portion of the flagellar organelle and consists of four rings (L,P,S, and M) mounted on a central rod.

Its subcellular location is the periplasm. It is found in the bacterial flagellum basal body. Assembles around the rod to form the L-ring and probably protects the motor/basal body from shearing forces during rotation. The polypeptide is Flagellar P-ring protein (Nitrosomonas europaea (strain ATCC 19718 / CIP 103999 / KCTC 2705 / NBRC 14298)).